The sequence spans 276 residues: NADPH-dependent 7-cyano-7-deazaguanine reductase (276 aa).

I83 to S85 is a binding site for substrate. S85–K86 contributes to the NADPH binding site. Residue C184 is the Thioimide intermediate of the active site. Catalysis depends on D191, which acts as the Proton donor. Residue H223–E224 participates in substrate binding. R252–G253 contributes to the NADPH binding site.

It belongs to the GTP cyclohydrolase I family. QueF type 2 subfamily. As to quaternary structure, homodimer.

It localises to the cytoplasm. It carries out the reaction 7-aminomethyl-7-carbaguanine + 2 NADP(+) = 7-cyano-7-deazaguanine + 2 NADPH + 3 H(+). It participates in tRNA modification; tRNA-queuosine biosynthesis. In terms of biological role, catalyzes the NADPH-dependent reduction of 7-cyano-7-deazaguanine (preQ0) to 7-aminomethyl-7-deazaguanine (preQ1). The chain is NADPH-dependent 7-cyano-7-deazaguanine reductase from Ectopseudomonas mendocina (strain ymp) (Pseudomonas mendocina).